The following is a 431-amino-acid chain: Gamma-glutamyl phosphate reductase (431 aa).

The protein belongs to the gamma-glutamyl phosphate reductase family.

The protein resides in the cytoplasm. The catalysed reaction is L-glutamate 5-semialdehyde + phosphate + NADP(+) = L-glutamyl 5-phosphate + NADPH + H(+). The protein operates within amino-acid biosynthesis; L-proline biosynthesis; L-glutamate 5-semialdehyde from L-glutamate: step 2/2. Functionally, catalyzes the NADPH-dependent reduction of L-glutamate 5-phosphate into L-glutamate 5-semialdehyde and phosphate. The product spontaneously undergoes cyclization to form 1-pyrroline-5-carboxylate. The chain is Gamma-glutamyl phosphate reductase from Bifidobacterium longum subsp. infantis (strain ATCC 15697 / DSM 20088 / JCM 1222 / NCTC 11817 / S12).